Consider the following 82-residue polypeptide: uncharacterized protein (82 aa).

The next 2 membrane-spanning stretches (helical) occupy residues 29 to 49 (LMNA…GIII) and 55 to 75 (WSLP…LTFF).

It localises to the cell membrane. This is an uncharacterized protein from Escherichia coli (strain K12).